Here is a 481-residue protein sequence, read N- to C-terminus: Rho GTPase-activating protein 15 (481 aa).

Ser-51, Ser-111, Ser-204, Ser-207, and Ser-249 each carry phosphoserine. A PH domain is found at 87-197 (MVEKEGYLQK…WFQAIKNAID (111 aa)). The region spanning 287-476 (SHLHTVCERE…FMLTEYDKIF (190 aa)) is the Rho-GAP domain.

The protein resides in the cytoplasm. Its subcellular location is the membrane. Functionally, GTPase activator for the Rho-type GTPases by converting them to an inactive GDP-bound state. Has activity toward RAC1. Overexpression results in an increase in actin stress fibers and cell contraction. This is Rho GTPase-activating protein 15 (Arhgap15) from Mus musculus (Mouse).